Reading from the N-terminus, the 610-residue chain is Elongation factor 4 (610 aa).

In terms of domain architecture, tr-type G spans 11 to 193 (EKIRNFSIIA…QIVEKVPAPT (183 aa)). Residues 23-28 (DHGKST) and 140-143 (NKID) each bind GTP.

It belongs to the TRAFAC class translation factor GTPase superfamily. Classic translation factor GTPase family. LepA subfamily.

It is found in the cell membrane. It catalyses the reaction GTP + H2O = GDP + phosphate + H(+). Required for accurate and efficient protein synthesis under certain stress conditions. May act as a fidelity factor of the translation reaction, by catalyzing a one-codon backward translocation of tRNAs on improperly translocated ribosomes. Back-translocation proceeds from a post-translocation (POST) complex to a pre-translocation (PRE) complex, thus giving elongation factor G a second chance to translocate the tRNAs correctly. Binds to ribosomes in a GTP-dependent manner. In Streptococcus pyogenes serotype M6 (strain ATCC BAA-946 / MGAS10394), this protein is Elongation factor 4.